We begin with the raw amino-acid sequence, 209 residues long: Octanoyltransferase (209 aa).

The BPL/LPL catalytic domain maps to 28–203; that stretch reads NATPETLLLL…RFQGLLDEWL (176 aa). Substrate is bound by residues 66–73, 133–135, and 146–148; these read RGGDVTFH, AIG, and GFA. Cys164 acts as the Acyl-thioester intermediate in catalysis.

It belongs to the LipB family.

The protein resides in the cytoplasm. It carries out the reaction octanoyl-[ACP] + L-lysyl-[protein] = N(6)-octanoyl-L-lysyl-[protein] + holo-[ACP] + H(+). The protein operates within protein modification; protein lipoylation via endogenous pathway; protein N(6)-(lipoyl)lysine from octanoyl-[acyl-carrier-protein]: step 1/2. Its function is as follows. Catalyzes the transfer of endogenously produced octanoic acid from octanoyl-acyl-carrier-protein onto the lipoyl domains of lipoate-dependent enzymes. Lipoyl-ACP can also act as a substrate although octanoyl-ACP is likely to be the physiological substrate. This is Octanoyltransferase from Pelobacter propionicus (strain DSM 2379 / NBRC 103807 / OttBd1).